Reading from the N-terminus, the 738-residue chain is 1,4-alpha-glucan branching enzyme GlgB (738 aa).

Residue aspartate 417 is the Nucleophile of the active site. Glutamate 472 serves as the catalytic Proton donor.

This sequence belongs to the glycosyl hydrolase 13 family. GlgB subfamily. In terms of assembly, monomer.

It carries out the reaction Transfers a segment of a (1-&gt;4)-alpha-D-glucan chain to a primary hydroxy group in a similar glucan chain.. It participates in glycan biosynthesis; glycogen biosynthesis. In terms of biological role, catalyzes the formation of the alpha-1,6-glucosidic linkages in glycogen by scission of a 1,4-alpha-linked oligosaccharide from growing alpha-1,4-glucan chains and the subsequent attachment of the oligosaccharide to the alpha-1,6 position. This Burkholderia pseudomallei (strain K96243) protein is 1,4-alpha-glucan branching enzyme GlgB.